The following is a 339-amino-acid chain: Protein FAM131B (339 aa).

The tract at residues 1-22 (MDSTSSLHGSSLHRPSTEQTRT) is disordered. 3 positions are modified to phosphoserine: S47, S114, and S117. The tract at residues 222 to 339 (GPAFGDSQPS…PLLTQPSTPA (118 aa)) is disordered. Composition is skewed to polar residues over residues 239–250 (QPASGYSAQEPS) and 324–339 (PTTS…STPA). T325 is subject to Phosphothreonine. S327 carries the post-translational modification Phosphoserine.

It belongs to the FAM131 family.

This chain is Protein FAM131B (FAM131B), found in Bos taurus (Bovine).